Here is a 485-residue protein sequence, read N- to C-terminus: FAD-dependent monooxygenase elcH (485 aa).

An N-terminal signal peptide occupies residues 1-19 (MFTLRSLAILAVFAATALA). FAD is bound by residues Asp59 and Gly73. N-linked (GlcNAc...) asparagine glycans are attached at residues Asn126, Asn147, and Asn157.

The protein belongs to the paxM FAD-dependent monooxygenase family. It depends on FAD as a cofactor.

It participates in secondary metabolite biosynthesis. Functionally, FAD-dependent monooxygenase; part of the gene cluster that mediates the biosynthesis of elsinochrome C, a perelyenequinone phytotoxin structurally similar to cercosporin. The first step of elsinochrome C biosynthesis is performed by the polyketide synthase elcA which catalyzes the formation of nor-toralactone. The starter unit acyltransferase (SAT) domain of elcA initiates polyketide extension by the selective utilization of acetyl-CoA, which is elongated to the heptaketide in the beta-ketoacyl synthase (KS) domain by successive condensations with six malonyl units introduced by the malonyl acyltransferase (MAT) domain. The product template (PT) domain catalyzes C4-C9 and C2-C11 aldol cyclizations and dehydrations to a trihydroxynaphthalene, which is thought to be delivered to the thioesterase (TE) domain for product release. The bifunctional enzyme elcB then methylates nor-toralactone to toralactone before conducting an unusual oxidative aromatic ring opening. The next step in perylenequinone biosynthesis is an O-methylation at the nascent OH-6 of the elcB product performed by the O-methyltransferase elcD. The oxidative coupling of the two monomeric naphthol units in perylenequinone biosynthesis is catalyzed by the FAD-dependent monooxygenase elcE and the multicopper oxidase elcG. ElcG might catalyze the first intermolecular coupling in a regio- and stereo-selective manner via a phenol radical coupling mechanism and the elcE could forge the second C-C bond intramolecularly via a hydride transfer mechanism. The fasciclin domain-containing protein elcF might also play a role duting this step. The last piece of the puzzle in the biosynthesis of elsinochrome C is the additional annulation by enolate coupling to afford the dihydrobenzo(ghi)perylenequinone system, catalyzed by the FAD-dependent monooxygenase elcH. The protein is FAD-dependent monooxygenase elcH of Phaeosphaeria nodorum (strain SN15 / ATCC MYA-4574 / FGSC 10173) (Glume blotch fungus).